Here is a 428-residue protein sequence, read N- to C-terminus: 3-phosphoshikimate 1-carboxyvinyltransferase (428 aa).

Positions 21, 22, and 26 each coordinate 3-phosphoshikimate. K21 serves as a coordination point for phosphoenolpyruvate. 2 residues coordinate phosphoenolpyruvate: G91 and R119. 3-phosphoshikimate is bound by residues S164, Q166, D313, and K340. A phosphoenolpyruvate-binding site is contributed by Q166. D313 serves as the catalytic Proton acceptor. 2 residues coordinate phosphoenolpyruvate: R344 and R386.

It belongs to the EPSP synthase family. In terms of assembly, monomer.

It localises to the cytoplasm. The catalysed reaction is 3-phosphoshikimate + phosphoenolpyruvate = 5-O-(1-carboxyvinyl)-3-phosphoshikimate + phosphate. Its pathway is metabolic intermediate biosynthesis; chorismate biosynthesis; chorismate from D-erythrose 4-phosphate and phosphoenolpyruvate: step 6/7. Catalyzes the transfer of the enolpyruvyl moiety of phosphoenolpyruvate (PEP) to the 5-hydroxyl of shikimate-3-phosphate (S3P) to produce enolpyruvyl shikimate-3-phosphate and inorganic phosphate. This is 3-phosphoshikimate 1-carboxyvinyltransferase from Campylobacter jejuni subsp. jejuni serotype O:6 (strain 81116 / NCTC 11828).